The chain runs to 599 residues: Putative clathrin assembly protein At1g03050 (599 aa).

Residues 26–162 (GRSASLSELD…DFRMQARHGK (137 aa)) enclose the ENTH domain. 2 disordered regions span residues 332 to 382 (KQSK…PEEE) and 580 to 599 (QGHMNLRQNQNQPYSYTPQY). Acidic residues-rich tracts occupy residues 341-359 (ADEDDDEARTEEVNEEQED) and 373-382 (EEDDVKPEEE). Polar residues predominate over residues 585–599 (LRQNQNQPYSYTPQY).

It is found in the membrane. Its subcellular location is the clathrin-coated pit. The protein resides in the golgi apparatus. The protein localises to the cytoplasmic vesicle. It localises to the clathrin-coated vesicle. This chain is Putative clathrin assembly protein At1g03050, found in Arabidopsis thaliana (Mouse-ear cress).